We begin with the raw amino-acid sequence, 658 residues long: Glycogen debranching enzyme (658 aa).

Asp-336 (nucleophile) is an active-site residue. The active-site Proton donor is Glu-371.

Belongs to the glycosyl hydrolase 13 family.

The catalysed reaction is Hydrolysis of (1-&gt;6)-alpha-D-glucosidic linkages to branches with degrees of polymerization of three or four glucose residues in limit dextrin.. It participates in glycan degradation; glycogen degradation. In terms of biological role, removes maltotriose and maltotetraose chains that are attached by 1,6-alpha-linkage to the limit dextrin main chain, generating a debranched limit dextrin. The chain is Glycogen debranching enzyme from Klebsiella pneumoniae (strain 342).